The primary structure comprises 275 residues: Elongation factor Ts (275 aa).

Positions 76–79 are involved in Mg(2+) ion dislocation from EF-Tu; the sequence is TDFV.

It belongs to the EF-Ts family.

It is found in the cytoplasm. Functionally, associates with the EF-Tu.GDP complex and induces the exchange of GDP to GTP. It remains bound to the aminoacyl-tRNA.EF-Tu.GTP complex up to the GTP hydrolysis stage on the ribosome. The sequence is that of Elongation factor Ts from Corynebacterium glutamicum (strain ATCC 13032 / DSM 20300 / JCM 1318 / BCRC 11384 / CCUG 27702 / LMG 3730 / NBRC 12168 / NCIMB 10025 / NRRL B-2784 / 534).